We begin with the raw amino-acid sequence, 594 residues long: Maternal effect protein oskar (594 aa).

Residues 44–62 (QQQPKQQQQQQQHQSQHQH) show a composition bias toward low complexity. The disordered stretch occupies residues 44–68 (QQQPKQQQQQQQHQSQHQHQQQKQK). The region spanning 174–243 (EYPDIDTEIR…SGKRIFNIKP (70 aa)) is the HTH OST-type domain.

In terms of assembly, interacts with smaug (smg). As to expression, posterior pole of the oocyte.

Its function is as follows. Organizes the germ plasm and directs localization of the posterior determinant nanos. Oskar protein is required to keep oskar RNA and staufen protein at the posterior pole. This is Maternal effect protein oskar (osk) from Drosophila virilis (Fruit fly).